We begin with the raw amino-acid sequence, 413 residues long: MSVAVSPLAPKSYPDMPALRGVRMATAAAGIKYKNRTDVLLMVFDKPASVAGVFTKSKCPSAPVDFCRANLGSGAARAVVVNSGNANAFTGVKGKAATELTAKSAAAAVGCSEGEIFLASTGVIGEPLDASKFAGVLGDMNVRAEADFWQEAAKAIMTTDTYPKVSTRTAEIGGVIVTINGISKGAGMIAPDMATMLSFVVTDADIEPAALQSLLSAGVGPTFNSVTVDSDTSTSDTLMLFATGAAAEDGQVKVTSADDERLSSFRAALNDLLKDLALQVVRDGEGARKMVEVTVTGAENDAAAKKIALSIANSPLVKTAVAGEDANWGRVVMAVGKSGEMADRDRLAIWFGGVRVAVNGERDPDYSEAETTAVMRLEDITVKVDIGLGQGTATVWTCDLTKEYVAINGDYRS.

Substrate is bound by residues threonine 158, lysine 184, threonine 195, glutamate 285, asparagine 408, and serine 413. Threonine 195 functions as the Nucleophile in the catalytic mechanism.

Belongs to the ArgJ family. In terms of assembly, heterotetramer of two alpha and two beta chains.

The protein resides in the cytoplasm. The catalysed reaction is N(2)-acetyl-L-ornithine + L-glutamate = N-acetyl-L-glutamate + L-ornithine. It carries out the reaction L-glutamate + acetyl-CoA = N-acetyl-L-glutamate + CoA + H(+). It functions in the pathway amino-acid biosynthesis; L-arginine biosynthesis; L-ornithine and N-acetyl-L-glutamate from L-glutamate and N(2)-acetyl-L-ornithine (cyclic): step 1/1. Its pathway is amino-acid biosynthesis; L-arginine biosynthesis; N(2)-acetyl-L-ornithine from L-glutamate: step 1/4. Functionally, catalyzes two activities which are involved in the cyclic version of arginine biosynthesis: the synthesis of N-acetylglutamate from glutamate and acetyl-CoA as the acetyl donor, and of ornithine by transacetylation between N(2)-acetylornithine and glutamate. This is Arginine biosynthesis bifunctional protein ArgJ from Agrobacterium fabrum (strain C58 / ATCC 33970) (Agrobacterium tumefaciens (strain C58)).